The chain runs to 380 residues: Cytochrome b (380 aa).

4 consecutive transmembrane segments (helical) span residues 34–54, 78–99, 114–134, and 179–199; these read FGSLLGICLTTQILTGLLLAA, WLIRNLHANGASFFFICIYMHI, WNTGVILLLTLMATAFVGYVL, and FFTLHFLLPFMIMGLTLIHLT. Positions 84 and 98 each coordinate heme b. Heme b contacts are provided by His-183 and His-197. An a ubiquinone-binding site is contributed by His-202. 4 helical membrane passes run 227–247, 289–309, 321–341, and 348–368; these read LKDTLGFMLMFLPLMTLALFS, LGGVLALAASMLILFLAPLLH, LSQLLFWTLTANLLILTWVGS, and FIIIGQLASLTYFTILLILFP.

It belongs to the cytochrome b family. As to quaternary structure, the cytochrome bc1 complex contains 11 subunits: 3 respiratory subunits (MT-CYB, CYC1 and UQCRFS1), 2 core proteins (UQCRC1 and UQCRC2) and 6 low-molecular weight proteins (UQCRH/QCR6, UQCRB/QCR7, UQCRQ/QCR8, UQCR10/QCR9, UQCR11/QCR10 and a cleavage product of UQCRFS1). This cytochrome bc1 complex then forms a dimer. It depends on heme b as a cofactor.

The protein resides in the mitochondrion inner membrane. Its function is as follows. Component of the ubiquinol-cytochrome c reductase complex (complex III or cytochrome b-c1 complex) that is part of the mitochondrial respiratory chain. The b-c1 complex mediates electron transfer from ubiquinol to cytochrome c. Contributes to the generation of a proton gradient across the mitochondrial membrane that is then used for ATP synthesis. This Balearica regulorum (Grey crowned-crane) protein is Cytochrome b (MT-CYB).